The sequence spans 448 residues: MREIVHLQTGQCGNQIGAKFWEVVSDEHGIATDGQYKGTSDLQLERISVYYNEVAGNKYVPRAVLIDLEPGTMDSVRSGPFGSLFRPDNFVFGQSGAGNNWAKGHYTEGAELVDSVLDVVRKEAEGCDCLQGFQITHSLGGGTGAGMGTLLISKIREEFPDRMMATFSVVPSPKVSDTVVEPYNATLSVHQLVENSDETFCIDNEALYDICFRTLKLQTPTYGDLNHLVSIVMSGITTCLRFPGQLNSDLRKLAVNMVPFPRLHFFMVGFAPLTARGSQQYRAVTVPELTSQMFDAKNMMAASDPRHGRYLTVAAYFRGKVSMKEVEENMLSVQSKNSNYFVEWIPNNVQTAHCDIAPRGLKMSVTFIGNSTAIQDLFKRIADQFTAMFRRKAFLHWYTGEGMDEMEFTEAESNMQDLVAEYQQYQEAHVDEDEVDEEVYEDEAPPEE.

GTP is bound by residues Gln11, Glu69, Ser138, Gly142, Thr143, Gly144, Asn204, and Asn226. Residue Glu69 coordinates Mg(2+).

The protein belongs to the tubulin family. As to quaternary structure, dimer of alpha and beta chains. A typical microtubule is a hollow water-filled tube with an outer diameter of 25 nm and an inner diameter of 15 nM. Alpha-beta heterodimers associate head-to-tail to form protofilaments running lengthwise along the microtubule wall with the beta-tubulin subunit facing the microtubule plus end conferring a structural polarity. Microtubules usually have 13 protofilaments but different protofilament numbers can be found in some organisms and specialized cells. The cofactor is Mg(2+).

The protein resides in the cytoplasm. The protein localises to the cytoskeleton. Tubulin is the major constituent of microtubules, a cylinder consisting of laterally associated linear protofilaments composed of alpha- and beta-tubulin heterodimers. Microtubules grow by the addition of GTP-tubulin dimers to the microtubule end, where a stabilizing cap forms. Below the cap, tubulin dimers are in GDP-bound state, owing to GTPase activity of alpha-tubulin. In Melampsora lini (Rust fungus), this protein is Tubulin beta chain (TUB1).